We begin with the raw amino-acid sequence, 437 residues long: Enolase 2 (437 aa).

Positions 160 and 169 each coordinate substrate. Residue glutamate 212 is the Proton donor of the active site. Mg(2+) is bound by residues aspartate 247, glutamate 296, and aspartate 321. Substrate contacts are provided by glutamate 296 and aspartate 321. Catalysis depends on lysine 346, which acts as the Proton acceptor. Residues serine 373–serine 376 and lysine 397 contribute to the substrate site.

It belongs to the enolase family. In terms of assembly, homodimer. Requires Mg(2+) as cofactor.

It localises to the cytoplasm. The enzyme catalyses (2R)-2-phosphoglycerate = phosphoenolpyruvate + H2O. The protein operates within carbohydrate degradation; glycolysis; pyruvate from D-glyceraldehyde 3-phosphate: step 4/5. The chain is Enolase 2 (ENO2) from Candida glabrata (strain ATCC 2001 / BCRC 20586 / JCM 3761 / NBRC 0622 / NRRL Y-65 / CBS 138) (Yeast).